Reading from the N-terminus, the 251-residue chain is Imidazole glycerol phosphate synthase subunit HisF (251 aa).

Catalysis depends on residues aspartate 11 and aspartate 130.

This sequence belongs to the HisA/HisF family. As to quaternary structure, heterodimer of HisH and HisF.

Its subcellular location is the cytoplasm. It carries out the reaction 5-[(5-phospho-1-deoxy-D-ribulos-1-ylimino)methylamino]-1-(5-phospho-beta-D-ribosyl)imidazole-4-carboxamide + L-glutamine = D-erythro-1-(imidazol-4-yl)glycerol 3-phosphate + 5-amino-1-(5-phospho-beta-D-ribosyl)imidazole-4-carboxamide + L-glutamate + H(+). Its pathway is amino-acid biosynthesis; L-histidine biosynthesis; L-histidine from 5-phospho-alpha-D-ribose 1-diphosphate: step 5/9. Functionally, IGPS catalyzes the conversion of PRFAR and glutamine to IGP, AICAR and glutamate. The HisF subunit catalyzes the cyclization activity that produces IGP and AICAR from PRFAR using the ammonia provided by the HisH subunit. The sequence is that of Imidazole glycerol phosphate synthase subunit HisF from Chlorobium phaeobacteroides (strain BS1).